Here is a 435-residue protein sequence, read N- to C-terminus: MADQESDKSIEIWKSFKLIKGLESARGNGTSMISLIMPPRDQVARVTKMLADEYGTASNIKSRVNRQSVLSAITSAQQRLKLYNKVPPNGLVLYTGTIVTDDGKEKKVTIDFEPFKPINASLYLCDNKFHTEPLNELLESDDKFGFIVMDGNGTLFGTLSGNTREVLHKFTVDLPKKHGRGGQSALRFARLRMEKRHNYVRKTAELATQFYINPATSQPNVSGLILAGSADFKTELSQSELFDPRLQAKILNVVDVSYGGENGFNQAIELSAEILSNVKFIQEKKLIGKYFEEISQDTGKYVFGVDDTLKALDMGAVETLIVWENLDINRYELKNGATGETVIKHLGKEQENDQSNFHDAESNAELEIVEKMPLLEWFANEYKRFGCTLEFVTNKSQEGSQFCRGFGGIGGLLRYQLDMRTFDELSDGEVYEDSD.

A2 bears the N-acetylalanine mark.

Belongs to the eukaryotic release factor 1 family. Heterodimer of two subunits, one of which binds GTP.

Its subcellular location is the cytoplasm. Its function is as follows. Directs the termination of nascent peptide synthesis (translation) in response to the termination codons UAA, UAG and UGA. Modulates plant growth and development. The chain is Eukaryotic peptide chain release factor subunit 1-3 from Brassica oleracea var. botrytis (Cauliflower).